A 118-amino-acid chain; its full sequence is Phosphoribosyl-AMP cyclohydrolase (118 aa).

A Mg(2+)-binding site is contributed by aspartate 87. Cysteine 88 contacts Zn(2+). Positions 89 and 91 each coordinate Mg(2+). Residues cysteine 104 and cysteine 111 each coordinate Zn(2+).

It belongs to the PRA-CH family. In terms of assembly, homodimer. The cofactor is Mg(2+). Requires Zn(2+) as cofactor.

The protein resides in the cytoplasm. It catalyses the reaction 1-(5-phospho-beta-D-ribosyl)-5'-AMP + H2O = 1-(5-phospho-beta-D-ribosyl)-5-[(5-phospho-beta-D-ribosylamino)methylideneamino]imidazole-4-carboxamide. It functions in the pathway amino-acid biosynthesis; L-histidine biosynthesis; L-histidine from 5-phospho-alpha-D-ribose 1-diphosphate: step 3/9. In terms of biological role, catalyzes the hydrolysis of the adenine ring of phosphoribosyl-AMP. The chain is Phosphoribosyl-AMP cyclohydrolase from Corynebacterium glutamicum (strain R).